The primary structure comprises 175 residues: Alpha-crystallin B chain (175 aa).

Methionine 1 is modified (N-acetylmethionine). At serine 19 the chain carries Phosphoserine. An O-linked (GlcNAc) serine glycan is attached at serine 41. Phosphoserine is present on residues serine 45 and serine 59. The sHSP domain occupies 56 to 164 (RAPSWIDTGL…PERTIPITRE (109 aa)). Position 83 (histidine 83) interacts with Zn(2+). Lysine 92 carries the post-translational modification N6-acetyllysine. Residues histidine 104, glutamate 106, histidine 111, and histidine 119 each contribute to the Zn(2+) site. A disordered region spans residues 142–175 (VLTVNGPRKQAPGPERTIPITREEKPAVTAAPKK). Lysine 166 is subject to N6-acetyllysine. Residue threonine 170 is glycosylated (O-linked (GlcNAc) threonine).

Belongs to the small heat shock protein (HSP20) family. Heteromer composed of three CRYAA and one CRYAB subunits. Aggregates with homologous proteins, including the small heat shock protein HSPB1, to form large heteromeric complexes. Inter-subunit bridging via zinc ions enhances stability, which is crucial as there is no protein turn over in the lens. Interacts with HSPBAP1 and TTN/titin. Interacts with TMEM109; in the cellular response to DNA damage. Interacts with DES; binds rapidly during early stages of DES filament assembly and a reduced binding seen in the later stages. Interacts with TMED10; the interaction mediates the translocation from the cytoplasm into the ERGIC (endoplasmic reticulum-Golgi intermediate compartment) and thereby secretion. Interacts with ATP6V1A and with MTOR, forming a ternary complex. As to expression, lens as well as other tissues.

Its subcellular location is the cytoplasm. The protein resides in the nucleus. It is found in the secreted. It localises to the lysosome. Its function is as follows. May contribute to the transparency and refractive index of the lens. Has chaperone-like activity, preventing aggregation of various proteins under a wide range of stress conditions. In lens epithelial cells, stabilizes the ATP6V1A protein, preventing its degradation by the proteasome. In Oryctolagus cuniculus (Rabbit), this protein is Alpha-crystallin B chain (CRYAB).